Reading from the N-terminus, the 123-residue chain is MLHTANPVIKHKAGLLNLAEELSNVSKACKIMGVSRDTFYRYRELVAEGGVDAQINRSRRAPNLKNRTDEATEQAVVDYAVAFPTHGQHRASNELRKQGVFISDSGVRSVWLLHNLENLKRRY.

This is an uncharacterized protein from Escherichia coli O157:H7.